The chain runs to 324 residues: MATH domain and coiled-coil domain-containing protein At3g44790 (324 aa).

Positions 3-125 (YEKFTWVIKN…NNEVKIVVEV (123 aa)) constitute an MATH domain. Residues 241 to 309 (FKVDWLERKL…ALLEKEKAKS (69 aa)) are a coiled coil.

The polypeptide is MATH domain and coiled-coil domain-containing protein At3g44790 (Arabidopsis thaliana (Mouse-ear cress)).